The following is a 324-amino-acid chain: Acetyl-coenzyme A carboxylase carboxyl transferase subunit alpha (324 aa).

Positions 44-298 (QLEAKATQLR…KTAIVKSLDD (255 aa)) constitute a CoA carboxyltransferase C-terminal domain.

Belongs to the AccA family. In terms of assembly, acetyl-CoA carboxylase is a heterohexamer composed of biotin carboxyl carrier protein (AccB), biotin carboxylase (AccC) and two subunits each of ACCase subunit alpha (AccA) and ACCase subunit beta (AccD).

Its subcellular location is the cytoplasm. The catalysed reaction is N(6)-carboxybiotinyl-L-lysyl-[protein] + acetyl-CoA = N(6)-biotinyl-L-lysyl-[protein] + malonyl-CoA. Its pathway is lipid metabolism; malonyl-CoA biosynthesis; malonyl-CoA from acetyl-CoA: step 1/1. Component of the acetyl coenzyme A carboxylase (ACC) complex. First, biotin carboxylase catalyzes the carboxylation of biotin on its carrier protein (BCCP) and then the CO(2) group is transferred by the carboxyltransferase to acetyl-CoA to form malonyl-CoA. The chain is Acetyl-coenzyme A carboxylase carboxyl transferase subunit alpha from Trichodesmium erythraeum (strain IMS101).